We begin with the raw amino-acid sequence, 173 residues long: Trafficking regulator of GLUT4 1 (173 aa).

Residues 1–10 (MANPAQPPLQ) show a composition bias toward pro residues. A disordered region spans residues 1-20 (MANPAQPPLQDPGSTSPLEL). The Cytoplasmic segment spans residues 1 to 102 (MANPAQPPLQ…QDQEAPKDYL (102 aa)). Residues S16, S43, S45, S70, S84, and S85 each carry the phosphoserine modification. Residues 103–123 (VLAIASCFCPVWPLNLIPLIF) constitute an intramembrane region (helical). The Cytoplasmic segment spans residues 124 to 150 (SIMSRSSVQQGDLDGARRLGRLARLLS). A helical transmembrane segment spans residues 151-171 (ITFIILGIVIIIVAVTVNFTV). The Extracellular segment spans residues 172 to 173 (PK).

It belongs to the CD225/Dispanin family. As to quaternary structure, interacts with SLC2A4; the interaction is required for proper SLC2A4 reacycling after insulin stimulation. Expressed specifically in white and brown adipose tissues.

The protein localises to the cell membrane. It is found in the endomembrane system. Its subcellular location is the cytoplasm. The protein resides in the perinuclear region. Regulates insulin-mediated adipose tissue glucose uptake and transport by modulation of SLC2A4 recycling. Not required for SLC2A4 membrane fusion upon an initial stimulus, but rather is necessary for proper protein recycling during prolonged insulin stimulation. This Mus musculus (Mouse) protein is Trafficking regulator of GLUT4 1 (Trarg1).